The chain runs to 231 residues: ATP phosphoribosyltransferase (231 aa).

It belongs to the ATP phosphoribosyltransferase family. Short subfamily. In terms of assembly, heteromultimer composed of HisG and HisZ subunits.

Its subcellular location is the cytoplasm. It carries out the reaction 1-(5-phospho-beta-D-ribosyl)-ATP + diphosphate = 5-phospho-alpha-D-ribose 1-diphosphate + ATP. It participates in amino-acid biosynthesis; L-histidine biosynthesis; L-histidine from 5-phospho-alpha-D-ribose 1-diphosphate: step 1/9. In terms of biological role, catalyzes the condensation of ATP and 5-phosphoribose 1-diphosphate to form N'-(5'-phosphoribosyl)-ATP (PR-ATP). Has a crucial role in the pathway because the rate of histidine biosynthesis seems to be controlled primarily by regulation of HisG enzymatic activity. This chain is ATP phosphoribosyltransferase, found in Brucella suis biovar 1 (strain 1330).